The sequence spans 348 residues: Phosphoribosylformylglycinamidine cyclo-ligase (348 aa).

This sequence belongs to the AIR synthase family.

The protein localises to the cytoplasm. It catalyses the reaction 2-formamido-N(1)-(5-O-phospho-beta-D-ribosyl)acetamidine + ATP = 5-amino-1-(5-phospho-beta-D-ribosyl)imidazole + ADP + phosphate + H(+). Its pathway is purine metabolism; IMP biosynthesis via de novo pathway; 5-amino-1-(5-phospho-D-ribosyl)imidazole from N(2)-formyl-N(1)-(5-phospho-D-ribosyl)glycinamide: step 2/2. In Geotalea uraniireducens (strain Rf4) (Geobacter uraniireducens), this protein is Phosphoribosylformylglycinamidine cyclo-ligase.